We begin with the raw amino-acid sequence, 250 residues long: MNARLTGLGLNLLSFAVGIGGWYLLTATGAVVLPGPVDVLERAVTLLLNGQLVGDIFASLRRVLSGFVLGVALAIPVGFLMGWYRIARSLIEPWVQFFRMIPPLAVIPLAIVTLGIDESPKIFVIFLASFLSSVVATYQGVISVDRTLINAARVLGAKDATIFARVIVPASVPFILVGVRIGLGSAWATVVAAELIAAQSGLGYRMQQAQLYYDLPTIFVSLVTIGILGLFMDRLLQAADRRLTQWQERA.

6 helical membrane passes run 12–32, 63–83, 94–114, 122–142, 172–192, and 211–231; these read LLSFAVGIGGWYLLTATGAVV, VLSGFVLGVALAIPVGFLMGW, WVQFFRMIPPLAVIPLAIVTL, IFVIFLASFLSSVVATYQGVI, VPFILVGVRIGLGSAWATVVA, and LYYDLPTIFVSLVTIGILGLF. One can recognise an ABC transmembrane type-1 domain in the interval 56–236; the sequence is IFASLRRVLS…ILGLFMDRLL (181 aa).

This sequence belongs to the binding-protein-dependent transport system permease family. In terms of assembly, the complex is composed of two ATP-binding proteins (BAB2_1147), two transmembrane proteins (BAB2_1148) and a solute-binding protein (BAB2_1146).

It is found in the cell inner membrane. In terms of biological role, probably part of an ABC transporter complex. Probably responsible for the translocation of the substrate across the membrane. This chain is Probable ABC transporter permease protein BAB2_1148, found in Brucella abortus (strain 2308).